A 241-amino-acid polypeptide reads, in one-letter code: Large ribosomal subunit protein uL1 (241 aa).

It belongs to the universal ribosomal protein uL1 family. In terms of assembly, part of the 50S ribosomal subunit.

In terms of biological role, binds directly to 23S rRNA. The L1 stalk is quite mobile in the ribosome, and is involved in E site tRNA release. Its function is as follows. Protein L1 is also a translational repressor protein, it controls the translation of the L11 operon by binding to its mRNA. This is Large ribosomal subunit protein uL1 from Streptomyces avermitilis (strain ATCC 31267 / DSM 46492 / JCM 5070 / NBRC 14893 / NCIMB 12804 / NRRL 8165 / MA-4680).